Reading from the N-terminus, the 151-residue chain is Deoxyuridine 5'-triphosphate nucleotidohydrolase (151 aa).

Substrate is bound by residues 70-72, Asn83, and 87-89; these read RSG and LID.

It belongs to the dUTPase family. It depends on Mg(2+) as a cofactor.

It carries out the reaction dUTP + H2O = dUMP + diphosphate + H(+). Its pathway is pyrimidine metabolism; dUMP biosynthesis; dUMP from dCTP (dUTP route): step 2/2. In terms of biological role, this enzyme is involved in nucleotide metabolism: it produces dUMP, the immediate precursor of thymidine nucleotides and it decreases the intracellular concentration of dUTP so that uracil cannot be incorporated into DNA. This Methylococcus capsulatus (strain ATCC 33009 / NCIMB 11132 / Bath) protein is Deoxyuridine 5'-triphosphate nucleotidohydrolase.